The primary structure comprises 336 residues: C4-dicarboxylate-binding periplasmic protein DctP (336 aa).

An N-terminal signal peptide occupies residues Met1 to Ala31. Positions 48, 101, 176, 216, 220, and 243 each coordinate (S)-malate. Residues Lys48, Lys101, Arg176, Asn216, Asn220, and Tyr243 each contribute to the succinate site.

Belongs to the bacterial solute-binding protein 7 family. The complex comprises the extracytoplasmic solute receptor protein DctP, and the two transmembrane proteins DctQ and DctM.

It localises to the periplasm. Part of the tripartite ATP-independent periplasmic (TRAP) transport system DctPQM involved in C4-dicarboxylates uptake. Required for the utilization of succinate, fumarate, L-malate and alpha-ketoglutarate. Binds succinate and malate. The protein is C4-dicarboxylate-binding periplasmic protein DctP of Shewanella loihica (strain ATCC BAA-1088 / PV-4).